Consider the following 413-residue polypeptide: MIQFQKKTPNFLFYDYETFGIHTALDKPAQFACIRTDINLNIIDDPQYFYCFPSDDYLPDPGSVLITHITPQYTEKNGTNEYNFSQKIYDILMQSNTCVVGYNNINFDDEITRNIFYRNFFDPYEWSWKNGNSRWDILNLLRACYALRPTGINWPKNELGLTSFKLSDLTKTNNIVHLNAHNAVSDVYATIEIAKLVKKKQPRLFDFFFKIRKKNELYKLIDLRNFQPIIYISAYFGAIYHNMSCILPIAWHENNSNILIAIDLFKDIKTLINMCKKICFDSIFIKNLLDSGVVLLHLNRCPILAPIQVIRKEDYNRLNFHRFSLNKKIELIKKNMFFIQNIKIIFSKNNNTNQFFNVDLEIYNGFFNSKDKKKIQIIRNTDPVFLKHIFCNFHDSRLKNLFFRYRARNFFIH.

An Exonuclease domain is found at 12 to 193; that stretch reads LFYDYETFGI…VSDVYATIEI (182 aa). Mg(2+) contacts are provided by Asp15, Glu17, and Asp186. Glu17 is a binding site for substrate. The ExoI SH3-like domain occupies 202–349; the sequence is PRLFDFFFKI…QNIKIIFSKN (148 aa). Residues 350–413 enclose the ExoI C-terminal domain; that stretch reads NNTNQFFNVD…RYRARNFFIH (64 aa).

In terms of assembly, monomer. Interacts with ssb (via C-terminus); this interaction stimulates the exonuclease activity by recruiting the enzyme to its substrate. The cofactor is Mg(2+).

The enzyme catalyses Exonucleolytic cleavage in the 3'- to 5'-direction to yield nucleoside 5'-phosphates.. Degrades single-stranded DNA (ssDNA) in a highly processive manner. Also functions as a DNA deoxyribophosphodiesterase that releases deoxyribose-phosphate moieties following the cleavage of DNA at an apurinic/apyrimidinic (AP) site by either an AP endonuclease or AP lyase. This chain is Exodeoxyribonuclease I (sbcB), found in Buchnera aphidicola subsp. Acyrthosiphon pisum (strain APS) (Acyrthosiphon pisum symbiotic bacterium).